Reading from the N-terminus, the 703-residue chain is Methionine--tRNA ligase (703 aa).

A 'HIGH' region motif is present at residues 12–22 (PYANGPLHIGH). Zn(2+) is bound by residues Cys143, Cys146, Cys156, and Cys159. A 'KMSKS' region motif is present at residues 331–335 (KMSKT). Lys334 contacts ATP. Low complexity-rich tracts occupy residues 556 to 568 (AAPQ…PAKG) and 577 to 594 (EAPA…AAES). 2 disordered regions span residues 556–594 (AAPQ…AAES) and 682–703 (GPGG…SEVK). In terms of domain architecture, tRNA-binding spans 602–703 (DFAKVVLKAG…GDVAPGSEVK (102 aa)).

This sequence belongs to the class-I aminoacyl-tRNA synthetase family. MetG type 1 subfamily. Homodimer. Zn(2+) serves as cofactor.

The protein localises to the cytoplasm. It carries out the reaction tRNA(Met) + L-methionine + ATP = L-methionyl-tRNA(Met) + AMP + diphosphate. Its function is as follows. Is required not only for elongation of protein synthesis but also for the initiation of all mRNA translation through initiator tRNA(fMet) aminoacylation. The polypeptide is Methionine--tRNA ligase (Myxococcus xanthus (strain DK1622)).